A 248-amino-acid polypeptide reads, in one-letter code: Methionine aminopeptidase 1 (248 aa).

His-77 contacts substrate. Positions 94, 105, and 168 each coordinate a divalent metal cation. Residue His-175 coordinates substrate. Glu-201 and Glu-232 together coordinate a divalent metal cation.

As to quaternary structure, monomer. Co(2+) is required as a cofactor. Zn(2+) serves as cofactor. The cofactor is Mn(2+). It depends on Fe(2+) as a cofactor.

It localises to the cytoplasm. The enzyme catalyses Release of N-terminal amino acids, preferentially methionine, from peptides and arylamides.. Functionally, removes the N-terminal methionine from nascent proteins. The N-terminal methionine is often cleaved when the second residue in the primary sequence is small and uncharged (Met-Ala-, Cys, Gly, Pro, Ser, Thr, or Val). Requires deformylation of the N(alpha)-formylated initiator methionine before it can be hydrolyzed. The chain is Methionine aminopeptidase 1 from Bacillus subtilis (strain 168).